A 224-amino-acid polypeptide reads, in one-letter code: UPF0758 protein IL0240 (224 aa).

In terms of domain architecture, MPN spans glycine 102 to leucine 224. Residues histidine 173, histidine 175, and aspartate 186 each contribute to the Zn(2+) site. The JAMM motif signature appears at histidine 173–aspartate 186.

It belongs to the UPF0758 family.

The protein is UPF0758 protein IL0240 of Idiomarina loihiensis (strain ATCC BAA-735 / DSM 15497 / L2-TR).